The sequence spans 224 residues: Transposase for insertion sequence-like element IS431mec (224 aa).

Positions 33-52 form a DNA-binding region, H-T-H motif; that stretch reads EILRERGVNVHHSTVYRWVQ. In terms of domain architecture, Integrase catalytic spans 73-222; the sequence is WRIDETYIKI…SPCHEISIML (150 aa).

Involved in the transposition of the insertion sequence. The protein is Transposase for insertion sequence-like element IS431mec (tnp) of Staphylococcus aureus (strain NCTC 8325 / PS 47).